A 161-amino-acid chain; its full sequence is Vasotocin-neurophysin VT (161 aa).

An N-terminal signal peptide occupies residues 1 to 19; it reads MAEPSLPLSFLCLLALSSA. A disulfide bond links cysteine 20 and cysteine 25. A Glycine amide modification is found at glycine 28. Intrachain disulfides connect cysteine 41–cysteine 85, cysteine 44–cysteine 58, cysteine 52–cysteine 75, cysteine 59–cysteine 65, cysteine 92–cysteine 104, cysteine 98–cysteine 116, and cysteine 105–cysteine 110.

It belongs to the vasopressin/oxytocin family. Seven disulfide bonds are present in neurophysin.

Its subcellular location is the secreted. In terms of biological role, vasotocin is an antidiuretic hormone. This is Vasotocin-neurophysin VT from Gallus gallus (Chicken).